The sequence spans 158 residues: SsrA-binding protein (158 aa).

The span at 133–152 (KRQTLREQQDNREAQREMRE) shows a compositional bias: basic and acidic residues. Positions 133–158 (KRQTLREQQDNREAQREMRERNRRRG) are disordered.

Belongs to the SmpB family.

The protein localises to the cytoplasm. Required for rescue of stalled ribosomes mediated by trans-translation. Binds to transfer-messenger RNA (tmRNA), required for stable association of tmRNA with ribosomes. tmRNA and SmpB together mimic tRNA shape, replacing the anticodon stem-loop with SmpB. tmRNA is encoded by the ssrA gene; the 2 termini fold to resemble tRNA(Ala) and it encodes a 'tag peptide', a short internal open reading frame. During trans-translation Ala-aminoacylated tmRNA acts like a tRNA, entering the A-site of stalled ribosomes, displacing the stalled mRNA. The ribosome then switches to translate the ORF on the tmRNA; the nascent peptide is terminated with the 'tag peptide' encoded by the tmRNA and targeted for degradation. The ribosome is freed to recommence translation, which seems to be the essential function of trans-translation. The chain is SsrA-binding protein from Pseudarthrobacter chlorophenolicus (strain ATCC 700700 / DSM 12829 / CIP 107037 / JCM 12360 / KCTC 9906 / NCIMB 13794 / A6) (Arthrobacter chlorophenolicus).